The primary structure comprises 1108 residues: AP-3 complex subunit beta (1108 aa).

HEAT repeat units lie at residues 90-127 (DSAL…IDII), 327-363 (IEAQ…LRPS), 397-433 (ENIG…STVP), and 434-471 (DVTE…LNAT). Residues 480 to 490 (KEKEKEKDVKE) are compositionally biased toward basic and acidic residues. Disordered stretches follow at residues 480-501 (KEKE…HSSS), 736-797 (DEEE…YDGE), and 811-835 (LFGI…GEEE). Composition is skewed to acidic residues over residues 736-764 (DEEE…EDFF) and 780-797 (YDED…YDGE).

It belongs to the adaptor complexes large subunit family. As to quaternary structure, adaptor protein complex 3 (AP-3) is a heterotetramer composed of two large adaptins (delta-type subunit and beta-type subunit), a medium adaptin (mu-type subunit) and a small adaptin (sigma-type subunit).

Its subcellular location is the endosome membrane. Its function is as follows. Part of the AP-3 complex, an adaptor-related complex which is essential for the compartmentalization of the endocytic pathway. This chain is AP-3 complex subunit beta (ap3b-1), found in Dictyostelium discoideum (Social amoeba).